The sequence spans 209 residues: D-aminoacyl-tRNA deacylase 1 (209 aa).

The Mg(2+) site is built by valine 4, glutamine 6, and cysteine 28. Residues 139–140 carry the Gly-cisPro motif, important for rejection of L-amino acids motif; sequence GP. The disordered stretch occupies residues 142 to 209; it reads TIELESPAPG…EGDVSSEREP (68 aa). Basic and acidic residues-rich tracts occupy residues 159 to 170 and 181 to 194; these read QLSKLEKQQQRK and SSKE…EDRS. Serine 197, serine 204, and serine 205 each carry phosphoserine.

It belongs to the DTD family. Homodimer. Interacts with CDC45 and TOPBP1. Preferentially phosphorylated in cells arrested early in S phase. Phosphorylation in the C-terminus weakens the interaction with CDC45. Expressed in many adult and fetal tissues. Highest levels in testis, ovary, spleen and in adult and fetal brain.

It localises to the nucleus. Its subcellular location is the cytoplasm. It catalyses the reaction glycyl-tRNA(Ala) + H2O = tRNA(Ala) + glycine + H(+). It carries out the reaction a D-aminoacyl-tRNA + H2O = a tRNA + a D-alpha-amino acid + H(+). Its function is as follows. Possible ATPase involved in DNA replication, may facilitate loading of CDC45 onto pre-replication complexes. In terms of biological role, an aminoacyl-tRNA editing enzyme that deacylates mischarged D-aminoacyl-tRNAs. Also deacylates mischarged glycyl-tRNA(Ala), protecting cells against glycine mischarging by AlaRS. Acts via tRNA-based rather than protein-based catalysis; rejects L-amino acids rather than detecting D-amino acids in the active site. By recycling D-aminoacyl-tRNA to D-amino acids and free tRNA molecules, this enzyme counteracts the toxicity associated with the formation of D-aminoacyl-tRNA entities in vivo and helps enforce protein L-homochirality. The polypeptide is D-aminoacyl-tRNA deacylase 1 (DTD1) (Homo sapiens (Human)).